The sequence spans 1582 residues: Nik-related protein kinase (1582 aa).

The Protein kinase domain maps to 25-313; sequence FSLDKTIGLG…SANMLQHPFV (289 aa). ATP-binding positions include 31–39 and lysine 54; that span reads IGLGTYGRI. The active-site Proton acceptor is the aspartate 177. Low complexity-rich tracts occupy residues 492 to 507, 527 to 538, and 551 to 572; these read QVQSQVSKKQQAQTQT, PEQQRQGQAPEQ, and EQNQAPEQPEVQEQAAEPAQAE. The tract at residues 492–579 is disordered; the sequence is QVQSQVSKKQ…QAETEAEEPE (88 aa). The stretch at 725 to 759 forms a coiled coil; the sequence is QRRQRRWEDIFNQHEEELRQVDKDKEDESSDNDEV. Disordered stretches follow at residues 783–859 and 926–1156; these read EVQE…PPYS and ASAD…GSGM. 3 stretches are compositionally biased toward polar residues: residues 803–814, 825–834, and 850–859; these read FSSSVPQRSLLE, RSSQNRQNWL, and RRSQSSPPYS. Residues serine 852 and serine 855 each carry the phosphoserine modification. A compositionally biased stretch (acidic residues) spans 926 to 944; sequence ASADTDGDDDDESNDTFED. Composition is skewed to basic and acidic residues over residues 965–978 and 999–1016; these read VCKDHDDDNNKFVD and GSCKQDGYDGSRGKEEAY. Phosphoserine occurs at positions 1027, 1031, and 1034. Basic and acidic residues-rich tracts occupy residues 1043–1061 and 1125–1135; these read QEEHAANIGSERRGSEGDG and PDHESDNKDIS. A compositionally biased stretch (polar residues) spans 1136–1154; the sequence is ESSTQSDFSANHSSPSKGS. Residues 1209–1552 enclose the CNH domain; it reads TSEICCGSLW…RFLCTRGDKL (344 aa).

Belongs to the protein kinase superfamily. STE Ser/Thr protein kinase family. STE20 subfamily.

It carries out the reaction L-seryl-[protein] + ATP = O-phospho-L-seryl-[protein] + ADP + H(+). The catalysed reaction is L-threonyl-[protein] + ATP = O-phospho-L-threonyl-[protein] + ADP + H(+). Functionally, may phosphorylate cofilin-1 and induce actin polymerization through this process, during the late stages of embryogenesis. Involved in the TNF-alpha-induced signaling pathway. This Homo sapiens (Human) protein is Nik-related protein kinase (NRK).